Consider the following 378-residue polypeptide: Queuine tRNA-ribosyltransferase (378 aa).

The active-site Proton acceptor is the Asp-89. Residues 89-93 (DSGGF), Asp-143, Gln-194, and Gly-221 each bind substrate. Residues 252-258 (GVGTPAN) are RNA binding. Asp-271 acts as the Nucleophile in catalysis. An RNA binding; important for wobble base 34 recognition region spans residues 276–280 (ARNGR). Residues Cys-309, Cys-311, Cys-314, and His-340 each coordinate Zn(2+).

Belongs to the queuine tRNA-ribosyltransferase family. As to quaternary structure, homodimer. Within each dimer, one monomer is responsible for RNA recognition and catalysis, while the other monomer binds to the replacement base PreQ1. Zn(2+) serves as cofactor.

The catalysed reaction is 7-aminomethyl-7-carbaguanine + guanosine(34) in tRNA = 7-aminomethyl-7-carbaguanosine(34) in tRNA + guanine. It participates in tRNA modification; tRNA-queuosine biosynthesis. Functionally, catalyzes the base-exchange of a guanine (G) residue with the queuine precursor 7-aminomethyl-7-deazaguanine (PreQ1) at position 34 (anticodon wobble position) in tRNAs with GU(N) anticodons (tRNA-Asp, -Asn, -His and -Tyr). Catalysis occurs through a double-displacement mechanism. The nucleophile active site attacks the C1' of nucleotide 34 to detach the guanine base from the RNA, forming a covalent enzyme-RNA intermediate. The proton acceptor active site deprotonates the incoming PreQ1, allowing a nucleophilic attack on the C1' of the ribose to form the product. After dissociation, two additional enzymatic reactions on the tRNA convert PreQ1 to queuine (Q), resulting in the hypermodified nucleoside queuosine (7-(((4,5-cis-dihydroxy-2-cyclopenten-1-yl)amino)methyl)-7-deazaguanosine). This is Queuine tRNA-ribosyltransferase from Lachnoclostridium phytofermentans (strain ATCC 700394 / DSM 18823 / ISDg) (Clostridium phytofermentans).